The sequence spans 522 residues: Glutamate--cysteine ligase (522 aa).

The protein belongs to the glutamate--cysteine ligase type 1 family. Type 1 subfamily.

It catalyses the reaction L-cysteine + L-glutamate + ATP = gamma-L-glutamyl-L-cysteine + ADP + phosphate + H(+). Its pathway is sulfur metabolism; glutathione biosynthesis; glutathione from L-cysteine and L-glutamate: step 1/2. This chain is Glutamate--cysteine ligase, found in Vibrio parahaemolyticus serotype O3:K6 (strain RIMD 2210633).